The following is a 256-amino-acid chain: MKIITCYKCVPDEQDIAINNADGTLDFSKADSKISQYDLNAIEAACQLKQQLGDAQVVAMSVGGKALTNAKGRKDVLSRGPDELIVVIDDQFEQALPQHTATALAAAAQKSGFDLLICGDGSSDLYAQQVGLLVGEALNIPAINGVSKILSLTDSTLTVERELEDEVETLSIPLPAVIAVSTDINTPQIPSMKAILGAAKKPVQVWSPADIGLNSVPAYSAQQVAAPKQRERQRVVIEGDGEEQIAAFVENLRKII.

This sequence belongs to the ETF beta-subunit/FixA family. Heterodimer of FixA and FixB.

The protein operates within amine and polyamine metabolism; carnitine metabolism. Its function is as follows. Required for anaerobic carnitine reduction. May bring reductant to CaiA. The chain is Protein FixA from Salmonella paratyphi B (strain ATCC BAA-1250 / SPB7).